A 153-amino-acid chain; its full sequence is General odorant-binding protein lush (153 aa).

The signal sequence occupies residues 1 to 29 (MKHWKRRSSAVFAIVLQVLVLLLPDPAVA). Cystine bridges form between cysteine 46-cysteine 79, cysteine 75-cysteine 132, and cysteine 121-cysteine 141. Serine 81 and threonine 86 together coordinate 1-propanol. The butan-1-ol site is built by serine 81 and threonine 86. Residues serine 81 and threonine 86 each contribute to the ethanol site.

Belongs to the PBP/GOBP family. Specifically expressed in chemosensory system in both males and females. Expressed in a subset of trichoid chemosensory sensilla located on the ventral-lateral surface of the third antennal segment. Secreted from non-neuronal support cells into the sensillum lymph that bathes the olfactory neurons within these sensilla.

Its subcellular location is the secreted. Functionally, odorant-binding protein required for olfactory behavior and for activity of pheromone-sensitive neurons. Binds to alcohols and mediates avoidance behavior to high concentrations of alcohols, the alcohol-binding possibly resulting in activation of receptors on T2B neurons, the activation of these receptors inhibiting these neurons. Acts in concert with Snmp and lush to capture cVA molecules on the surface of Or67d expressing olfactory dendrites and facilitate their transfer to the odorant-receptor Orco complex. Required for cVA response, probably by binding to VA. May act by serving as an adapter that bridges the presence of gaseous pheromone molecules, cVA, to activation of specific neuronal receptors expressed on T1 olfactory neurons, possibly via a specific conformational change induced by cVA that in turn activates T1 receptors. T1 neurons are excited by the pheromone VA, while T2 neurons are inhibited by alcohols. Also binds to phthalates. In Drosophila melanogaster (Fruit fly), this protein is General odorant-binding protein lush (lush).